The sequence spans 368 residues: UPF0284 protein Cyan7425_0342 (368 aa).

This sequence belongs to the UPF0284 family.

The sequence is that of UPF0284 protein Cyan7425_0342 from Cyanothece sp. (strain PCC 7425 / ATCC 29141).